Here is a 255-residue protein sequence, read N- to C-terminus: MQINTIPVNPTLPRHIAIIMDGNGRWAERRSRPRTTGHRAGVKAAMRTVDFCLEKGIKMLTLFAFSSENWNRPADEVNFLMEMSIKLFGRGIEELHRRGVQVRFIGERKRFDIALVEHMTKAEHLTANNQRLILSLAVSYGGRQDITMAARALAQDVAAGRLKPEQIDEDLLGQHMALADLPPPDMFIRTSGVIRISNFLLWQIAYTELWFTDVMWPEFNSTVLQQALDDYASRERRFGLTNAQIASRGKGSIPA.

D21 is a catalytic residue. Position 21 (D21) interacts with Mg(2+). Substrate-binding positions include 22–25 (GNGR), W26, R34, H38, and 66–68 (SSE). The active-site Proton acceptor is N69. Substrate-binding positions include W70, R72, R189, and 195–197 (RIS). Mg(2+) is bound at residue E208.

The protein belongs to the UPP synthase family. In terms of assembly, homodimer. It depends on Mg(2+) as a cofactor.

The enzyme catalyses 8 isopentenyl diphosphate + (2E,6E)-farnesyl diphosphate = di-trans,octa-cis-undecaprenyl diphosphate + 8 diphosphate. In terms of biological role, catalyzes the sequential condensation of isopentenyl diphosphate (IPP) with (2E,6E)-farnesyl diphosphate (E,E-FPP) to yield (2Z,6Z,10Z,14Z,18Z,22Z,26Z,30Z,34E,38E)-undecaprenyl diphosphate (di-trans,octa-cis-UPP). UPP is the precursor of glycosyl carrier lipid in the biosynthesis of bacterial cell wall polysaccharide components such as peptidoglycan and lipopolysaccharide. This Xylella fastidiosa (strain 9a5c) protein is Ditrans,polycis-undecaprenyl-diphosphate synthase ((2E,6E)-farnesyl-diphosphate specific).